Here is a 78-residue protein sequence, read N- to C-terminus: Large ribosomal subunit protein bL28 (78 aa).

Residues 1–21 (MSRVCQVTGKRPMSGNNRSHA) are disordered.

This sequence belongs to the bacterial ribosomal protein bL28 family.

In Photorhabdus laumondii subsp. laumondii (strain DSM 15139 / CIP 105565 / TT01) (Photorhabdus luminescens subsp. laumondii), this protein is Large ribosomal subunit protein bL28.